A 44-amino-acid polypeptide reads, in one-letter code: Thrombin-like enzyme F202 (44 aa).

Residues 1-44 (VVGGDECNINEHRFLVALYANSSLLCGGTLINQEWVLIAAHCDR) form the Peptidase S1 domain. An intrachain disulfide couples Cys26 to Cys42. Residue His41 is the Charge relay system of the active site.

It belongs to the peptidase S1 family. Snake venom subfamily. Monomer. In terms of processing, contains 6 disulfide bonds. As to expression, expressed by the venom gland.

It localises to the secreted. With respect to regulation, enzyme activity is markedly inhibited by TLCK and PMSF, and moderately by SBTi. Platelet aggregating activity is strongly inhibited by TLCK. Functionally, thrombin-like snake venom serine protease that coagulates fibrinogen by inducing a fast degradation of the alpha chain (FGA) from human citrated plasma, and a slow degradation of beta chain (FGB). Potently induces platelet aggregation in both platelet rich plasma and washed platelet preparations in a concentration-dependent fashion. Shows amidolytic activities. The chain is Thrombin-like enzyme F202 from Crotalus durissus cascavella (Northeastern Brazilian rattlesnake).